We begin with the raw amino-acid sequence, 370 residues long: Anthranilate phosphoribosyltransferase (370 aa).

5-phospho-alpha-D-ribose 1-diphosphate contacts are provided by residues glycine 82, 85-86, threonine 90, 92-95, 110-118, and serine 122; these read GD, NVST, and KHGNRAATS. Position 82 (glycine 82) interacts with anthranilate. A Mg(2+)-binding site is contributed by serine 94. Asparagine 113 provides a ligand contact to anthranilate. Arginine 168 serves as a coordination point for anthranilate. Aspartate 226 and glutamate 227 together coordinate Mg(2+).

The protein belongs to the anthranilate phosphoribosyltransferase family. As to quaternary structure, homodimer. Mg(2+) is required as a cofactor.

It catalyses the reaction N-(5-phospho-beta-D-ribosyl)anthranilate + diphosphate = 5-phospho-alpha-D-ribose 1-diphosphate + anthranilate. The protein operates within amino-acid biosynthesis; L-tryptophan biosynthesis; L-tryptophan from chorismate: step 2/5. In terms of biological role, catalyzes the transfer of the phosphoribosyl group of 5-phosphorylribose-1-pyrophosphate (PRPP) to anthranilate to yield N-(5'-phosphoribosyl)-anthranilate (PRA). This Methanosarcina acetivorans (strain ATCC 35395 / DSM 2834 / JCM 12185 / C2A) protein is Anthranilate phosphoribosyltransferase.